The primary structure comprises 125 residues: Small ribosomal subunit protein uS12 (125 aa).

Aspartate 89 is modified (3-methylthioaspartic acid). The disordered stretch occupies residues glycine 100–alanine 125. A compositionally biased stretch (basic residues) spans serine 113 to alanine 125.

It belongs to the universal ribosomal protein uS12 family. Part of the 30S ribosomal subunit. Contacts proteins S8 and S17. May interact with IF1 in the 30S initiation complex.

With S4 and S5 plays an important role in translational accuracy. Its function is as follows. Interacts with and stabilizes bases of the 16S rRNA that are involved in tRNA selection in the A site and with the mRNA backbone. Located at the interface of the 30S and 50S subunits, it traverses the body of the 30S subunit contacting proteins on the other side and probably holding the rRNA structure together. The combined cluster of proteins S8, S12 and S17 appears to hold together the shoulder and platform of the 30S subunit. The sequence is that of Small ribosomal subunit protein uS12 from Dechloromonas aromatica (strain RCB).